The following is a 230-amino-acid chain: Glutathione S-transferase 2 (230 aa).

The 85-residue stretch at 2–86 (AHFTLYSHAG…YLADKYDTDR (85 aa)) folds into the GST N-terminal domain. A GST C-terminal domain is found at 93-230 (DDPEYYKLIQ…EELAKAKEQH (138 aa)).

Belongs to the GST superfamily.

The enzyme catalyses RX + glutathione = an S-substituted glutathione + a halide anion + H(+). Its function is as follows. Involved in the oxidative stress response and detoxification. This Schizosaccharomyces pombe (strain 972 / ATCC 24843) (Fission yeast) protein is Glutathione S-transferase 2 (gst2).